Reading from the N-terminus, the 256-residue chain is Acetyl-coenzyme A carboxylase carboxyl transferase subunit alpha (256 aa).

One can recognise a CoA carboxyltransferase C-terminal domain in the interval 1–236 (MTDVARILKE…KLHLIDEITQ (236 aa)).

The protein belongs to the AccA family. In terms of assembly, acetyl-CoA carboxylase is a heterohexamer composed of biotin carboxyl carrier protein (AccB), biotin carboxylase (AccC) and two subunits each of ACCase subunit alpha (AccA) and ACCase subunit beta (AccD).

Its subcellular location is the cytoplasm. It catalyses the reaction N(6)-carboxybiotinyl-L-lysyl-[protein] + acetyl-CoA = N(6)-biotinyl-L-lysyl-[protein] + malonyl-CoA. It participates in lipid metabolism; malonyl-CoA biosynthesis; malonyl-CoA from acetyl-CoA: step 1/1. Component of the acetyl coenzyme A carboxylase (ACC) complex. First, biotin carboxylase catalyzes the carboxylation of biotin on its carrier protein (BCCP) and then the CO(2) group is transferred by the carboxyltransferase to acetyl-CoA to form malonyl-CoA. The chain is Acetyl-coenzyme A carboxylase carboxyl transferase subunit alpha from Streptococcus equi subsp. zooepidemicus (strain H70).